The sequence spans 183 residues: Apo-citrate lyase phosphoribosyl-dephospho-CoA transferase (183 aa).

This sequence belongs to the CitX family.

The catalysed reaction is apo-[citrate lyase ACP] + 2'-(5''-triphospho-alpha-D-ribosyl)-3'-dephospho-CoA = holo-[citrate lyase ACP] + diphosphate. Transfers 2-(5''-triphosphoribosyl)-3'-dephosphocoenzyme-A on a serine residue to the apo-acyl carrier protein (gamma chain) of the citrate lyase to yield holo-acyl carrier protein. This chain is Apo-citrate lyase phosphoribosyl-dephospho-CoA transferase, found in Escherichia coli O45:K1 (strain S88 / ExPEC).